The sequence spans 94 residues: uncharacterized protein (94 aa).

It to M.tuberculosis Rv2632c.

This is an uncharacterized protein from Mycobacterium tuberculosis (strain CDC 1551 / Oshkosh).